The primary structure comprises 317 residues: Cyclin-dependent kinase 1 (317 aa).

A Protein kinase domain is found at 7-292 (YQRQEKVGEG…AKRALIHPYF (286 aa)). Residues 13–21 (VGEGTYGVV) and Lys37 each bind ATP. At Thr17 the chain carries Phosphothreonine. Tyr18 is modified (phosphotyrosine; by SWE1). Asp133 (proton acceptor) is an active-site residue. Thr166 carries the phosphothreonine; by CAK modification. Positions 296-317 (DDRDHNNYNEDNIGIDKHQNMQ) are disordered.

It belongs to the protein kinase superfamily. CMGC Ser/Thr protein kinase family. CDC2/CDKX subfamily. As to quaternary structure, forms several complexes with cyclins CCN1, CLB2, CLN3, and HGC1. The CDC28-CCN1 complex associates with septin CDC11 upon hyphal induction. Interacts with IQG1, RFA2, and HSP90. In terms of processing, phosphorylated at Tyr-18 by SWE1 in a cell cycle-dependent manner. Yeast-form and hyphal cells display similar dynamics of phosphorylation and dephosphorylation of Tyr-18. Tyr-18 phosphorylation leads to inhibition of CDC28 kinase activity.

It carries out the reaction L-seryl-[protein] + ATP = O-phospho-L-seryl-[protein] + ADP + H(+). The enzyme catalyses L-threonyl-[protein] + ATP = O-phospho-L-threonyl-[protein] + ADP + H(+). Its activity is regulated as follows. Phosphorylation at Thr-17 or Tyr-18 inactivates the enzyme, while phosphorylation at Thr-166 activates it. In terms of biological role, cyclin-dependent kinase that acts as a master regulator of the mitotic and meiotic cell cycles. May drive the G1-S transition. Plays a role in mitotic exit. Plays a role in the expression of morphology-related transcription factors, and especially hyphae-specific genes. Binds distinct cyclin subunits as cells progress through the division cycle or flamentous growth. The CDC28-CLB2 complex regulates cytokinesis partly by phosphorylating the actomyosin ring component IQG1. The CDC28-CLN3 complex phosphorylates SLA1 which regulates cortical actin patch dynamics. The CDC28-CCN1 complex phosphorylates CDC11 and SEC2 upon induction of filamentous growth. The CDC28-HGC1 complex also phosphorylates SEC2 and maintains CDC11 phosphorylation throughout hyphal growth. Moreover, the CDC28-HGC1 complex phosphorylates and prevents RGA2 from localizing to hyphal tips, leading to localized CDC42 activation for hyphal extension. CDC28-HGC1 phosphorylation of EFG1 represses cell separation genes during hyphal growth. Additional substrates for CDC28 are RFA2 in G1-phase; MOB2, which is required for the maintenance of polarisome components and for inhibition of cell separation in hyphae; and GIN4 to regulate its association to SEP7 and subsequent septin ring assembly. The sequence is that of Cyclin-dependent kinase 1 from Candida albicans (strain SC5314 / ATCC MYA-2876) (Yeast).